The following is a 666-amino-acid chain: DNA ligase (666 aa).

NAD(+) contacts are provided by residues 31-35 (DKEFD), 80-81 (SL), and Glu-110. Residue Lys-112 is the N6-AMP-lysine intermediate of the active site. Arg-133, Glu-170, Lys-285, and Lys-309 together coordinate NAD(+). Zn(2+) contacts are provided by Cys-404, Cys-407, Cys-422, and Cys-428. Residues 588–666 (GYTDKLAGQS…SEDEFLKLIS (79 aa)) form the BRCT domain.

It belongs to the NAD-dependent DNA ligase family. LigA subfamily. Mg(2+) serves as cofactor. It depends on Mn(2+) as a cofactor.

The catalysed reaction is NAD(+) + (deoxyribonucleotide)n-3'-hydroxyl + 5'-phospho-(deoxyribonucleotide)m = (deoxyribonucleotide)n+m + AMP + beta-nicotinamide D-nucleotide.. Its function is as follows. DNA ligase that catalyzes the formation of phosphodiester linkages between 5'-phosphoryl and 3'-hydroxyl groups in double-stranded DNA using NAD as a coenzyme and as the energy source for the reaction. It is essential for DNA replication and repair of damaged DNA. This chain is DNA ligase, found in Bacteroides thetaiotaomicron (strain ATCC 29148 / DSM 2079 / JCM 5827 / CCUG 10774 / NCTC 10582 / VPI-5482 / E50).